A 295-amino-acid polypeptide reads, in one-letter code: Acetylglutamate kinase (295 aa).

Substrate is bound by residues 70 to 71 (GG), Arg92, and Asn191.

This sequence belongs to the acetylglutamate kinase family. ArgB subfamily.

Its subcellular location is the cytoplasm. It catalyses the reaction N-acetyl-L-glutamate + ATP = N-acetyl-L-glutamyl 5-phosphate + ADP. The protein operates within amino-acid biosynthesis; L-arginine biosynthesis; N(2)-acetyl-L-ornithine from L-glutamate: step 2/4. In terms of biological role, catalyzes the ATP-dependent phosphorylation of N-acetyl-L-glutamate. The chain is Acetylglutamate kinase from Mycobacterium avium (strain 104).